The primary structure comprises 206 residues: MEEEFLDIFDEEERLIGRKSRKEVHEKGYWHSTFHCWVVKREGKKTFLIFQKRHPLKDTAPNMFDVSSAGHIKSGESIEDGVRELKEELGIDAKPNELINIGIIKEEFHIGKNIDREFCHIYIYSNKAEIESYTLQRDEVVGLVKIEIDELARFLDNKIDGVFAEGFIVNQEGRRYKLSKILNKDDFVPHKYGYYKIVLRALMDDY.

The Nudix hydrolase domain maps to 29 to 169; the sequence is YWHSTFHCWV…DGVFAEGFIV (141 aa). The Nudix box signature appears at 69–90; sequence AGHIKSGESIEDGVRELKEELG. Positions 84 and 88 each coordinate Mg(2+).

Belongs to the Nudix hydrolase family. Requires Mg(2+) as cofactor.

This is an uncharacterized protein from Clostridium acetobutylicum (strain ATCC 824 / DSM 792 / JCM 1419 / IAM 19013 / LMG 5710 / NBRC 13948 / NRRL B-527 / VKM B-1787 / 2291 / W).